Reading from the N-terminus, the 405-residue chain is Homocitrate synthase AksA (405 aa).

One can recognise a Pyruvate carboxyltransferase domain in the interval 23 to 274; the sequence is IEICDVTLRD…IERYDTTKLN (252 aa).

The protein belongs to the alpha-IPM synthase/homocitrate synthase family.

The catalysed reaction is acetyl-CoA + 2-oxoglutarate + H2O = (2R)-homocitrate + CoA + H(+). The enzyme catalyses 2-oxoadipate + acetyl-CoA + H2O = (R)-dihomocitrate + CoA + H(+). It catalyses the reaction 2-oxoheptanedioate + acetyl-CoA + H2O = (R)-trihomocitrate + CoA + H(+). It functions in the pathway organic acid metabolism; 2-oxosuberate biosynthesis. Functionally, catalyzes the condensation of alpha-ketoglutarate and acetyl-CoA to form (R)-homocitrate. Can also catalyze the condensation of alpha-ketoadipate with acetyl-CoA to form (R)-homo(2)citrate, and the condensation of alpha-ketopimelate with acetyl-CoA to form (R)-homo(3)citrate. These reactions are part of the biosynthesis pathway of coenzyme B and biotin. This Methanosarcina mazei (strain ATCC BAA-159 / DSM 3647 / Goe1 / Go1 / JCM 11833 / OCM 88) (Methanosarcina frisia) protein is Homocitrate synthase AksA (aksA).